The chain runs to 243 residues: 1-(5-phosphoribosyl)-5-[(5-phosphoribosylamino)methylideneamino] imidazole-4-carboxamide isomerase (243 aa).

Aspartate 8 functions as the Proton acceptor in the catalytic mechanism. Catalysis depends on aspartate 129, which acts as the Proton donor.

This sequence belongs to the HisA/HisF family.

Its subcellular location is the cytoplasm. It carries out the reaction 1-(5-phospho-beta-D-ribosyl)-5-[(5-phospho-beta-D-ribosylamino)methylideneamino]imidazole-4-carboxamide = 5-[(5-phospho-1-deoxy-D-ribulos-1-ylimino)methylamino]-1-(5-phospho-beta-D-ribosyl)imidazole-4-carboxamide. Its pathway is amino-acid biosynthesis; L-histidine biosynthesis; L-histidine from 5-phospho-alpha-D-ribose 1-diphosphate: step 4/9. The polypeptide is 1-(5-phosphoribosyl)-5-[(5-phosphoribosylamino)methylideneamino] imidazole-4-carboxamide isomerase (Brucella suis biovar 1 (strain 1330)).